Consider the following 247-residue polypeptide: Carbonic anhydrase (247 aa).

An N-terminal signal peptide occupies residues 1–34 (MMFNKQIFTILILSLSLALAGSGCISEGAEDNVA). 93–95 (RSD) is a binding site for substrate. Glutamate 96 (proton donor/acceptor) is an active-site residue. 109-110 (QD) provides a ligand contact to substrate. Histidine 115 lines the Zn(2+) pocket. The active site involves glutamate 118. Histidine 151 and histidine 156 together coordinate Zn(2+). Residue asparagine 236 participates in substrate binding.

Belongs to the gamma-class carbonic anhydrase family. Homotrimer. Zn(2+) serves as cofactor.

It localises to the secreted. It carries out the reaction hydrogencarbonate + H(+) = CO2 + H2O. Reversible hydration of carbon dioxide. Important for growth on acetate. As a probably extracellular enzyme, it may support a H(+)/CH(3)COO(-) symport mechanism and/or conversion of CO(2) to HCO(3)(-), removing excess CO(2) produced by growth on acetate. This chain is Carbonic anhydrase, found in Methanosarcina thermophila (strain ATCC 43570 / DSM 1825 / OCM 12 / VKM B-1830 / TM-1).